The chain runs to 216 residues: Large ribosomal subunit protein bL25 (216 aa).

Positions 184–216 (VPPTSDVEEEEGDEDLEEDVEETAAEEEEGVEE) are disordered. Over residues 189–216 (DVEEEEGDEDLEEDVEETAAEEEEGVEE) the composition is skewed to acidic residues.

It belongs to the bacterial ribosomal protein bL25 family. CTC subfamily. As to quaternary structure, part of the 50S ribosomal subunit; part of the 5S rRNA/L5/L18/L25 subcomplex. Contacts the 5S rRNA. Binds to the 5S rRNA independently of L5 and L18.

Functionally, this is one of the proteins that binds to the 5S RNA in the ribosome where it forms part of the central protuberance. The polypeptide is Large ribosomal subunit protein bL25 (Desulforapulum autotrophicum (strain ATCC 43914 / DSM 3382 / VKM B-1955 / HRM2) (Desulfobacterium autotrophicum)).